Consider the following 198-residue polypeptide: Ribonuclease HII (198 aa).

One can recognise an RNase H type-2 domain in the interval 14–198; the sequence is HMIVGVDEAG…FAPVAQLQLV (185 aa). Positions 20, 21, and 110 each coordinate a divalent metal cation.

Belongs to the RNase HII family. It depends on Mn(2+) as a cofactor. The cofactor is Mg(2+).

Its subcellular location is the cytoplasm. It carries out the reaction Endonucleolytic cleavage to 5'-phosphomonoester.. Functionally, endonuclease that specifically degrades the RNA of RNA-DNA hybrids. The polypeptide is Ribonuclease HII (Sphingopyxis alaskensis (strain DSM 13593 / LMG 18877 / RB2256) (Sphingomonas alaskensis)).